A 693-amino-acid polypeptide reads, in one-letter code: Serine/threonine-protein kinase Pkn1 (693 aa).

The region spanning 59–328 (FRLVRRLGRG…QVALAEHVRV (270 aa)) is the Protein kinase domain. Residues 65-73 (LGRGGMGAV) and Lys-88 each bind ATP. Asp-180 acts as the Proton acceptor in catalysis. The PilZ domain maps to 393 to 491 (LVEVPVQVVL…LKAAVDALLQ (99 aa)). The TPR repeat unit spans residues 630–663 (ARSHFQSGGALERDGQLSQALDQYERGLKLAPLE).

Belongs to the protein kinase superfamily. Ser/Thr protein kinase family. Post-translationally, autophosphorylated.

The catalysed reaction is L-seryl-[protein] + ATP = O-phospho-L-seryl-[protein] + ADP + H(+). It carries out the reaction L-threonyl-[protein] + ATP = O-phospho-L-threonyl-[protein] + ADP + H(+). May be regulated by calcium or a calmodulin-like protein. In terms of biological role, plays an essential role in proper timing of early development events. The protein is Serine/threonine-protein kinase Pkn1 (pkn1) of Myxococcus xanthus.